The primary structure comprises 93 residues: MSRSLKKGPFADPSLLKKIEQLKGQSKKPVIRTWSRRSTIFPSFIGFTIAVYDGRKHVPVYIQDDMVGHKLGEFVPTRTFRGHAGSDDKKTGK.

It belongs to the universal ribosomal protein uS19 family.

Its function is as follows. Protein S19 forms a complex with S13 that binds strongly to the 16S ribosomal RNA. The polypeptide is Small ribosomal subunit protein uS19 (Oenococcus oeni (strain ATCC BAA-331 / PSU-1)).